The sequence spans 3172 residues: Erythronolide synthase EryA3 (3172 aa).

Positions 38 to 452 constitute a Ketosynthase family 3 (KS3) 1 domain; it reads GEPIAIVGMA…GTNAHVIVEE (415 aa). Module stretches follow at residues 41-1464 and 1492-2891; these read IAIV…DHYL and IAIV…DHIG. Residue C199 is the Acyl-thioester intermediate; for beta-ketoacyl synthase 1 activity of the active site. Residues H334 and H374 each act as for beta-ketoacyl synthase 1 activity in the active site. Residues 557-874 form an acyltransferase 1 region; that stretch reads VFPGQGAQWQ…LGEAYAQGVE (318 aa). S643 functions as the Acyl-ester intermediate; for acyltransferase 1 activity in the catalytic mechanism. The tract at residues 1117 to 1294 is beta-ketoacyl reductase 1; sequence GTVLVTGGTG…VTSIAWGLWA (178 aa). Residues 1125–1128, 1148–1151, 1177–1178, K1229, and 1249–1250 each bind NADP(+); these read TGGI, GRRG, DV, and FS. Catalysis depends on Y1264, which acts as the Acyl-ester intermediate; for beta-ketoacyl reductase 1 activity. A Carrier 1 domain is found at 1392 to 1467; sequence EHLAHLIRAE…RLADHYLERL (76 aa). S1427 is modified (O-(pantetheine 4'-phosphoryl)serine). The region spanning 1489–1916 is the Ketosynthase family 3 (KS3) 2 domain; it reads DDPIAIVGMA…GTNAHVIIAE (428 aa). Catalysis depends on C1661, which acts as the Acyl-thioester intermediate; for beta-ketoacyl synthase 2 activity. Catalysis depends on for beta-ketoacyl synthase 2 activity residues H1797 and H1837. The segment at 2022 to 2331 is acyltransferase 2; it reads VFVFPGQGAQ…LARAHVHGVA (310 aa). Residue S2112 is the Acyl-ester intermediate; for acyltransferase 2 activity of the active site. Residues 2557–2731 form a beta-ketoacyl reductase 2 region; sequence GTALVTGGTG…ATSVAWGAWA (175 aa). Residues 2565–2568, 2588–2591, 2617–2618, K2666, and 2686–2687 contribute to the NADP(+) site; these read TGAL, SRRG, DV, and FS. The active-site Acyl-ester intermediate; for beta-ketoacyl reductase 2 activity is the Y2701. The Carrier 2 domain occupies 2819-2894; sequence QELLEFTHSH…RLADHIGQQL (76 aa). S2854 is subject to O-(pantetheine 4'-phosphoryl)serine. The tract at residues 2960–3166 is thioesterase; it reads ICCAGTAAIS…DAIARHIDAW (207 aa). T2965 contacts substrate. Residue S3031 is the Nucleophile; for thioesterase activity of the active site. A3032 and D3058 together coordinate substrate. The active-site Proton acceptor; for thioesterase activity is the H3148.

Homodimer. Erythronolide synthase is composed of EryAI, EryAII and EryAIII multimodular (2 modules) polypeptides each coding for a functional synthase subunit which participates in 2 of the six FAS-like elongation steps required for formation of the polyketide. Module 1, 2, 3, 4, 5, and 6 participating in biosynthesis steps 1, 2, 3, 4, 5, and 6, respectively. Requires pantetheine 4'-phosphate as cofactor.

It catalyses the reaction 6 (S)-methylmalonyl-CoA + propanoyl-CoA + 6 NADPH + 12 H(+) = 6-deoxyerythronolide B + 6 CO2 + 6 NADP(+) + 7 CoA + H2O. Its pathway is antibiotic biosynthesis; erythromycin biosynthesis. With respect to regulation, inhibited by diphenyl phosphonates derivatives such as diphenyl allylphosphonate. Its function is as follows. Involved in the biosynthesis of antibiotic erythromycin via the biosynthesis of its aglycone precursor, 6-deoxyerythronolide B (6-dEB). In Saccharopolyspora erythraea (Streptomyces erythraeus), this protein is Erythronolide synthase EryA3.